Consider the following 152-residue polypeptide: Transcriptional repressor NrdR (152 aa).

A zinc finger spans residues 3-34; it reads CPFCNHGELKVIDSRNSPEANAIKRRRECLRC. The 91-residue stretch at 48 to 138 folds into the ATP-cone domain; it reads IQVLKRDGRY…VYRRFRDVGE (91 aa).

Belongs to the NrdR family. Zn(2+) serves as cofactor.

Functionally, negatively regulates transcription of bacterial ribonucleotide reductase nrd genes and operons by binding to NrdR-boxes. In Chlamydia muridarum (strain MoPn / Nigg), this protein is Transcriptional repressor NrdR.